The sequence spans 907 residues: MLEKNYDAASIEQRIAKKWEARGAFKAGMGSKSAAQSFCVMLPPPNVTGSLHMGHALNTTIQDIVVRFQRMRGKNVLWQPGMDHAGIATQMVVERQLAERQEPTRQEMGREKFVERIWEWRYETGGVIANQLRRLGVSCDWSRERFTMDDGLSEAVREVFVTLYKQGLIYRDKRLVNWDPKLLTAISDLEVEQKEVKGHLWHFRYPLEGKLFDPSDATTFITVATTRPETMLGDTGIAVNPEDDRYRNLIGQNAILPLVGRRLSIVADAYANPDEGSGAVKITPAHDFNDFEVGRRNNLRLINIFTEKAEVFLHENEAFFEGVVLSDALKMLVKDLDQKDRFIARDQIVSLMEEKGYLVTVDDHPHTVPYGDRSGVPIEPFLTDQWYVNAAELAKPAIEAVHQGKTQFIPDSWQKTYFNWMQNIQPWCVSRQLWWGHQIPAWYGPDGRVFVEKSEEEALNSALSHYGEVVNLTRDPDVLDTWFSSALWPFSTLGWPNKTPELATFYPTSLSVTGFDIIFFWVARMMMMGLHFMGEVPFPTVYVHALVRDQKGAKMSKSKGNIIDPLELIDQYSADSLRFTLAIMAAQGRDVKLDPSRIAGYRNFATKLWNATRFAQMNGVKHDPDFKPEKAKLALNRWILTELSKTVVAVTTGIENYKFNESASALYRFIWNTLCDWYLELLKPIFQGSNEDAKNEVQACTAWVLDEVYKLLHPFMPHMTEELWSLTETLGMKREDMLALIQWPEASFSDEEAASDINWLIDAVSAIRSVRFEMNIPAAALAPLVIVEGGELTLKRVELYESLLKKLARVETISFSDKAPALSAQMILGEAIFCLPLGQLIDLEAERARLMKDVSKIEQDIEKLSAKLSNPKFIENAKPEIVEVERNRIVELRTAQKKISLALERLV.

Residues 45 to 55 (PNVTGSLHMGH) carry the 'HIGH' region motif. The short motif at 554–558 (KMSKS) is the 'KMSKS' region element. K557 is a binding site for ATP. Residues 838 to 870 (GQLIDLEAERARLMKDVSKIEQDIEKLSAKLSN) adopt a coiled-coil conformation.

Belongs to the class-I aminoacyl-tRNA synthetase family. ValS type 1 subfamily. In terms of assembly, monomer.

The protein resides in the cytoplasm. It carries out the reaction tRNA(Val) + L-valine + ATP = L-valyl-tRNA(Val) + AMP + diphosphate. Its function is as follows. Catalyzes the attachment of valine to tRNA(Val). As ValRS can inadvertently accommodate and process structurally similar amino acids such as threonine, to avoid such errors, it has a 'posttransfer' editing activity that hydrolyzes mischarged Thr-tRNA(Val) in a tRNA-dependent manner. This chain is Valine--tRNA ligase, found in Bartonella henselae (strain ATCC 49882 / DSM 28221 / CCUG 30454 / Houston 1) (Rochalimaea henselae).